A 396-amino-acid polypeptide reads, in one-letter code: Protein btn1 (396 aa).

8 consecutive transmembrane segments (helical) span residues 15–35 (CFLI…SAAL), 45–65 (GVVL…ASIL), 76–96 (IGFC…SSSV), 138–158 (LAGL…NFSV), 161–181 (TLII…FVLP), 234–254 (FLVY…LLFP), 296–316 (LAIT…LYLT), and 321–341 (FVLF…VNVY).

The protein belongs to the battenin family.

The protein localises to the endoplasmic reticulum membrane. It is found in the vacuole membrane. Functionally, involved in vacuolar transport and vacuole pH homeostasis. Also required for cytokinesis. This is Protein btn1 from Schizosaccharomyces pombe (strain 972 / ATCC 24843) (Fission yeast).